The primary structure comprises 150 residues: Depactin (150 aa).

Residues 3 to 148 (SGTALDENVK…SEEAIGDKIK (146 aa)) form the ADF-H domain.

This sequence belongs to the actin-binding proteins ADF family.

Its function is as follows. Depactin interacts with actin at some of its 12 N-terminal residues and 20 C-terminal residues. Binds to actin monomers from filaments and in solution. The polypeptide is Depactin (Asterias amurensis (Northern Pacific seastar)).